Reading from the N-terminus, the 323-residue chain is Dolichyl-phosphate beta-glucosyltransferase ALG5A (323 aa).

At 1-5 (MKFWR) the chain is on the lumenal side. The helical transmembrane segment at 6 to 26 (FVQILFFLGVAAVGLVVAVMI) threads the bilayer. Topologically, residues 27 to 323 (ANADDTTLFD…GAWKIRDRRH (297 aa)) are cytoplasmic.

This sequence belongs to the glycosyltransferase 2 family.

The protein localises to the endoplasmic reticulum membrane. It catalyses the reaction a di-trans,poly-cis-dolichyl phosphate + UDP-alpha-D-glucose = a di-trans,poly-cis-dolichyl beta-D-glucosyl phosphate + UDP. It functions in the pathway protein modification; protein glycosylation. Functionally, dolichyl-phosphate beta-glucosyltransferase involved in the glycosylation of glycoproteins through the synthesis of dolichyl beta-D-glucosyl phosphate which serves as a sugar donor for transfer of three glucose residues to the Man-9-GlcNAc-2-PP-dolichol precursor to N-glycans. The sequence is that of Dolichyl-phosphate beta-glucosyltransferase ALG5A from Trichomonas vaginalis (strain ATCC PRA-98 / G3).